We begin with the raw amino-acid sequence, 116 residues long: Large ribosomal subunit protein bL17 (116 aa).

It belongs to the bacterial ribosomal protein bL17 family. As to quaternary structure, part of the 50S ribosomal subunit. Contacts protein L32.

This chain is Large ribosomal subunit protein bL17, found in Helicobacter hepaticus (strain ATCC 51449 / 3B1).